A 252-amino-acid chain; its full sequence is MGRLSWQVAAAAAVGLALTLEALPWVLRWLRSRRRRPRREALFFPSQVTCTEALLRAPGAELAELPEGCPCGLPHGESALSRLLRALLAARASLDLCLFAFSSPQLGRAVQLLHQRGVRVRVVTDCDYMALNGSQIGLLRKAGIQVRHDQDPGYMHHKFAIVDKRVLITGSLNWTTQAIQNNRENVLITEDDEYVRLFLEEFERIWEQFNPTKYTFFPPKKSHGSCAPPVSRAGGRLLSWHRTCGTSSESQT.

The Mitochondrial intermembrane segment spans residues 1-4 (MGRL). Residues 1-39 (MGRLSWQVAAAAAVGLALTLEALPWVLRWLRSRRRRPRR) form a required for mitochondrial localization region. Residues 5 to 27 (SWQVAAAAAVGLALTLEALPWVL) traverse the membrane as a helical segment. Topologically, residues 28 to 252 (RWLRSRRRRP…TCGTSSESQT (225 aa)) are cytoplasmic. The segment at 45 to 78 (PSQVTCTEALLRAPGAELAELPEGCPCGLPHGES) adopts a C3H1-type; atypical zinc-finger fold. The region spanning 151 to 178 (DPGYMHHKFAIVDKRVLITGSLNWTTQA) is the PLD phosphodiesterase domain. Catalysis depends on residues histidine 156, lysine 158, and aspartate 163.

Belongs to the phospholipase D family. MitoPLD/Zucchini subfamily. Homodimer. Interacts with MOV10L1. Interacts with MIGA1 and MIGA2; possibly facilitating homodimer formation. Interacts with GK2. As to expression, predominantly expressed in testis and ovary, but not limited to gonads (at protein level). It is also found in brain, heart, pituitary gland, prostate, pancreas, thyroid, bone marrow, lung and muscle.

It localises to the mitochondrion outer membrane. The protein localises to the golgi apparatus. It carries out the reaction a cardiolipin + H2O = a 1,2-diacyl-sn-glycero-3-phospho-(1'-sn-glycerol) + a 1,2-diacyl-sn-glycero-3-phosphate + H(+). With respect to regulation, MYC stimulates its phospholipase activity. MIGA1 and MIGA2 increase PLD6 self-association affinity and affects the homodimer conformation facilitating its phospholipase activity over the nuclease activity. Single stranded DNA (ssDNA) hydrolase activity does not depend upon, but is stimulated by the presence of Ca(2+) and Mn(2+). Functionally, presents phospholipase and nuclease activities, depending on the different physiological conditions. Interaction with Mitoguardin (MIGA1 or MIGA2) affects the dimer conformation, facilitating the lipase activity over the nuclease activity. Plays a key role in mitochondrial fusion and fission via its phospholipase activity. In its phospholipase role, it uses the mitochondrial lipid cardiolipin as substrate to generate phosphatidate (PA or 1,2-diacyl-sn-glycero-3-phosphate), a second messenger signaling lipid. Production of PA facilitates Mitofusin-mediated fusion, whereas the cleavage of PA by the Lipin family of phosphatases produces diacylgycerol (DAG) which promotes mitochondrial fission. Both Lipin and DAG regulate mitochondrial dynamics and membrane fusion/fission, important processes for adapting mitochondrial metabolism to changes in cell physiology. Mitochondrial fusion enables cells to cope with the increased nucleotide demand during DNA synthesis. Mitochondrial function and dynamics are closely associated with biological processes such as cell growth, proliferation, and differentiation. Mediator of MYC activity, promotes mitochondrial fusion and activates AMPK which in turn inhibits YAP/TAZ, thereby inducing cell growth and proliferation. The endonuclease activity plays a critical role in PIWI-interacting RNA (piRNA) biogenesis during spermatogenesis. Implicated in spermatogenesis and sperm fertility in testicular germ cells, its single strand-specific nuclease activity is critical for the biogenesis/maturation of PIWI-interacting RNA (piRNA). MOV10L1 selectively binds to piRNA precursors and funnels them to the endonuclease that catalyzes the first cleavage step of piRNA processing to generate piRNA intermediate fragments that are subsequently loaded to Piwi proteins. Cleaves either DNA or RNA substrates with similar affinity, producing a 5' phosphate end, in this way it participates in the processing of primary piRNA transcripts. piRNAs provide essential protection against the activity of mobile genetic elements. piRNA-mediated transposon silencing is thus critical for maintaining genome stability, in particular in germline cells when transposons are mobilized as a consequence of wide-spread genomic demethylation. PA may act as signaling molecule in the recognition/transport of the precursor RNAs of primary piRNAs. Interacts with tesmin in testes, suggesting a role in spermatogenesis via association with its interacting partner. This Homo sapiens (Human) protein is Mitochondrial cardiolipin hydrolase (PLD6).